Consider the following 92-residue polypeptide: Small ribosomal subunit protein bS20 (92 aa).

It belongs to the bacterial ribosomal protein bS20 family.

Functionally, binds directly to 16S ribosomal RNA. In Thermosipho africanus (strain TCF52B), this protein is Small ribosomal subunit protein bS20.